We begin with the raw amino-acid sequence, 317 residues long: Beta-ketoacyl-[acyl-carrier-protein] synthase III (317 aa).

Catalysis depends on residues Cys112 and His244. The tract at residues 245-249 (QANLR) is ACP-binding. Asn274 is a catalytic residue.

Belongs to the thiolase-like superfamily. FabH family. As to quaternary structure, homodimer.

Its subcellular location is the cytoplasm. The enzyme catalyses malonyl-[ACP] + acetyl-CoA + H(+) = 3-oxobutanoyl-[ACP] + CO2 + CoA. It participates in lipid metabolism; fatty acid biosynthesis. Functionally, catalyzes the condensation reaction of fatty acid synthesis by the addition to an acyl acceptor of two carbons from malonyl-ACP. Catalyzes the first condensation reaction which initiates fatty acid synthesis and may therefore play a role in governing the total rate of fatty acid production. Possesses both acetoacetyl-ACP synthase and acetyl transacylase activities. Its substrate specificity determines the biosynthesis of branched-chain and/or straight-chain of fatty acids. In Sodalis glossinidius (strain morsitans), this protein is Beta-ketoacyl-[acyl-carrier-protein] synthase III.